A 161-amino-acid chain; its full sequence is Leucine-rich colipase-like protein 1 (161 aa).

Positions 1–25 (MSVSVWPPLLLLLLLLLLWAVPTFQ) are cleaved as a signal peptide.

In Mus musculus (Mouse), this protein is Leucine-rich colipase-like protein 1 (Lrcol1).